Here is a 327-residue protein sequence, read N- to C-terminus: DNA-directed RNA polymerase subunit alpha (327 aa).

The alpha N-terminal domain (alpha-NTD) stretch occupies residues 1 to 231; sequence MIYQMQMPAK…DHIMYFANFS (231 aa). Residues 247–327 form an alpha C-terminal domain (alpha-CTD) region; that stretch reads DEFESMRKLL…GMDITRYQMK (81 aa).

It belongs to the RNA polymerase alpha chain family. As to quaternary structure, homodimer. The RNAP catalytic core consists of 2 alpha, 1 beta, 1 beta' and 1 omega subunit. When a sigma factor is associated with the core the holoenzyme is formed, which can initiate transcription.

It carries out the reaction RNA(n) + a ribonucleoside 5'-triphosphate = RNA(n+1) + diphosphate. Its function is as follows. DNA-dependent RNA polymerase catalyzes the transcription of DNA into RNA using the four ribonucleoside triphosphates as substrates. This Chlorobium phaeobacteroides (strain DSM 266 / SMG 266 / 2430) protein is DNA-directed RNA polymerase subunit alpha.